Here is a 255-residue protein sequence, read N- to C-terminus: tRNA (guanine-N(1)-)-methyltransferase (255 aa).

Residues Gly113 and 133–138 (IGDYVL) contribute to the S-adenosyl-L-methionine site.

This sequence belongs to the RNA methyltransferase TrmD family. As to quaternary structure, homodimer.

The protein resides in the cytoplasm. The catalysed reaction is guanosine(37) in tRNA + S-adenosyl-L-methionine = N(1)-methylguanosine(37) in tRNA + S-adenosyl-L-homocysteine + H(+). Specifically methylates guanosine-37 in various tRNAs. This Salmonella schwarzengrund (strain CVM19633) protein is tRNA (guanine-N(1)-)-methyltransferase.